Reading from the N-terminus, the 567-residue chain is Thiol:disulfide interchange protein DsbD (567 aa).

The first 19 residues, 1–19, serve as a signal peptide directing secretion; sequence MAQRIFTLILLLCSTSAFA. Cystine bridges form between Cys122-Cys128 and Cys185-Cys307. 8 consecutive transmembrane segments (helical) span residues 166–186, 210–230, 246–266, 299–319, 326–346, 360–380, 387–407, and 418–438; these read LPFS…TPCV, LLLA…LGLV, YVLI…FGLF, IAGL…LLYI, WLGG…LMLV, WMAH…VFLL, AWGL…AFIT, and IVQI…QDWA. Residues 435-567 form the Thioredoxin domain; it reads QDWAFGSPSA…FSAHLHDRQP (133 aa). Cys482 and Cys485 form a disulfide bridge.

It belongs to the thioredoxin family. DsbD subfamily.

It is found in the cell inner membrane. It carries out the reaction [protein]-dithiol + NAD(+) = [protein]-disulfide + NADH + H(+). The enzyme catalyses [protein]-dithiol + NADP(+) = [protein]-disulfide + NADPH + H(+). Functionally, required to facilitate the formation of correct disulfide bonds in some periplasmic proteins and for the assembly of the periplasmic c-type cytochromes. Acts by transferring electrons from cytoplasmic thioredoxin to the periplasm. This transfer involves a cascade of disulfide bond formation and reduction steps. The sequence is that of Thiol:disulfide interchange protein DsbD from Salmonella choleraesuis (strain SC-B67).